The primary structure comprises 1025 residues: Multidrug resistance protein MdtC (1025 aa).

Transmembrane regions (helical) follow at residues 3 to 23, 333 to 353, 360 to 380, 387 to 407, 431 to 451, 463 to 483, 528 to 548, 853 to 873, 875 to 895, 897 to 917, 953 to 973, and 984 to 1004; these read FFAL…AITL, EVEQ…FLFL, IIPA…MYLC, LSLM…IVVL, VGFT…PLLL, FAVT…TLTP, LVGV…ISIP, VILI…LYES, VHPL…LLAL, LFNA…IGIV, PIMM…LSGG, and ITIV…TPVV.

The protein belongs to the resistance-nodulation-cell division (RND) (TC 2.A.6) family. MdtC subfamily. Part of a tripartite efflux system composed of MdtA, MdtB and MdtC. MdtC forms a heteromultimer with MdtB.

It localises to the cell inner membrane. This Shigella sonnei (strain Ss046) protein is Multidrug resistance protein MdtC.